Reading from the N-terminus, the 100-residue chain is Urease subunit gamma (100 aa).

This sequence belongs to the urease gamma subunit family. In terms of assembly, heterotrimer of UreA (gamma), UreB (beta) and UreC (alpha) subunits. Three heterotrimers associate to form the active enzyme.

The protein localises to the cytoplasm. The catalysed reaction is urea + 2 H2O + H(+) = hydrogencarbonate + 2 NH4(+). The protein operates within nitrogen metabolism; urea degradation; CO(2) and NH(3) from urea (urease route): step 1/1. This Rhodopseudomonas palustris (strain BisA53) protein is Urease subunit gamma.